A 314-amino-acid chain; its full sequence is Ribosomal RNA small subunit methyltransferase H (314 aa).

S-adenosyl-L-methionine-binding positions include 40-42 (GGH), D60, F85, D107, and Q114.

Belongs to the methyltransferase superfamily. RsmH family.

Its subcellular location is the cytoplasm. The enzyme catalyses cytidine(1402) in 16S rRNA + S-adenosyl-L-methionine = N(4)-methylcytidine(1402) in 16S rRNA + S-adenosyl-L-homocysteine + H(+). Specifically methylates the N4 position of cytidine in position 1402 (C1402) of 16S rRNA. The polypeptide is Ribosomal RNA small subunit methyltransferase H (Hydrogenovibrio crunogenus (strain DSM 25203 / XCL-2) (Thiomicrospira crunogena)).